A 339-amino-acid chain; its full sequence is GTPase Era (339 aa).

The 45-residue stretch at 4 to 48 (RHLAKFAYREEFKGDTEALAAAVREDASTGSTSQLPLEVQFGKMS) folds into the RPE1 insert domain. The region spanning 51–220 (KTVSVCIIGR…ITSKAKISPW (170 aa)) is the Era-type G domain. The tract at residues 59–66 (GRPNSGKS) is G1. 59 to 66 (GRPNSGKS) is a GTP binding site. The tract at residues 85–89 (QTTRS) is G2. The segment at 106-109 (DTPG) is G3. GTP is bound by residues 106–110 (DTPGI) and 168–171 (NKID). Positions 168–171 (NKID) are G4. The interval 196–198 (ISA) is G5. Residues 248 to 325 (LQKELPYKLT…HLFLFVKVRE (78 aa)) form the KH type-2 domain.

It belongs to the TRAFAC class TrmE-Era-EngA-EngB-Septin-like GTPase superfamily. Era GTPase family. In terms of assembly, monomer.

It is found in the cytoplasm. It localises to the cell inner membrane. An essential GTPase that binds both GDP and GTP, with rapid nucleotide exchange. Plays a role in 16S rRNA processing and 30S ribosomal subunit biogenesis and possibly also in cell cycle regulation and energy metabolism. This Rickettsia conorii (strain ATCC VR-613 / Malish 7) protein is GTPase Era.